Here is a 259-residue protein sequence, read N- to C-terminus: Dysbindin domain-containing protein 2 (259 aa).

2 disordered regions span residues 27-56 and 174-259; these read SCER…PVSR and ADVF…GACS. Positions 32–46 are enriched in pro residues; it reads SPPPPLPHFRLPPLP. Residues 205 to 223 show a composition bias toward low complexity; the sequence is TSDRTTSRTSSSSSSDSST. Residues Ser217 and Ser218 each carry the phosphoserine modification. Thr237 carries the post-translational modification Phosphothreonine. At Ser242 the chain carries Phosphoserine.

Belongs to the dysbindin family. As to quaternary structure, monomer. Interacts with CSNK1D and CSNK1E. In terms of tissue distribution, detected in brain.

In terms of biological role, may modulate the activity of casein kinase-1. Inhibits CSNK1D autophosphorylation (in vitro). This Homo sapiens (Human) protein is Dysbindin domain-containing protein 2 (DBNDD2).